A 240-amino-acid chain; its full sequence is Venom hemolysin-like protein 1 (240 aa).

The signal sequence occupies residues 1–18; it reads MQYKLILLVVGLFQASLA. Residues 25 to 50 are disordered; it reads ESVPHPSKDVAPPDTQDSSTQTEVTT. Positions 39–50 are enriched in polar residues; that stretch reads TQDSSTQTEVTT.

As to expression, expressed by the venom gland (anterior main gland) (at protein level).

It localises to the secreted. In Platymeris rhadamanthus (Red spot assassin bug), this protein is Venom hemolysin-like protein 1.